The chain runs to 279 residues: Tryptophan synthase alpha chain (279 aa).

Residues E50 and D61 each act as proton acceptor in the active site.

Belongs to the TrpA family. In terms of assembly, tetramer of two alpha and two beta chains.

It carries out the reaction (1S,2R)-1-C-(indol-3-yl)glycerol 3-phosphate + L-serine = D-glyceraldehyde 3-phosphate + L-tryptophan + H2O. It functions in the pathway amino-acid biosynthesis; L-tryptophan biosynthesis; L-tryptophan from chorismate: step 5/5. In terms of biological role, the alpha subunit is responsible for the aldol cleavage of indoleglycerol phosphate to indole and glyceraldehyde 3-phosphate. In Brucella melitensis biotype 1 (strain ATCC 23456 / CCUG 17765 / NCTC 10094 / 16M), this protein is Tryptophan synthase alpha chain.